The primary structure comprises 283 residues: Diphthine methyl ester synthase (283 aa).

S-adenosyl-L-methionine is bound by residues Leu-9, Asp-84, Gly-87, 112 to 113, Leu-163, Met-221, and His-246; that span reads SI.

This sequence belongs to the diphthine synthase family.

It is found in the cytoplasm. It carries out the reaction 2-[(3S)-amino-3-carboxypropyl]-L-histidyl-[translation elongation factor 2] + 4 S-adenosyl-L-methionine = diphthine methyl ester-[translation elongation factor 2] + 4 S-adenosyl-L-homocysteine + 3 H(+). It functions in the pathway protein modification; peptidyl-diphthamide biosynthesis. In terms of biological role, S-adenosyl-L-methionine-dependent methyltransferase that catalyzes four methylations of the modified target histidine residue in translation elongation factor 2 (EF-2), to form an intermediate called diphthine methyl ester. The four successive methylation reactions represent the second step of diphthamide biosynthesis. This Schizosaccharomyces pombe (strain 972 / ATCC 24843) (Fission yeast) protein is Diphthine methyl ester synthase (dph5).